A 313-amino-acid polypeptide reads, in one-letter code: Aspartate carbamoyltransferase catalytic subunit (313 aa).

Carbamoyl phosphate-binding residues include Arg59 and Thr60. L-aspartate is bound at residue Lys87. Positions 109, 137, and 140 each coordinate carbamoyl phosphate. The L-aspartate site is built by Arg170 and Arg224. 2 residues coordinate carbamoyl phosphate: Gly265 and Pro266.

The protein belongs to the aspartate/ornithine carbamoyltransferase superfamily. ATCase family. Heterododecamer (2C3:3R2) of six catalytic PyrB chains organized as two trimers (C3), and six regulatory PyrI chains organized as three dimers (R2).

It catalyses the reaction carbamoyl phosphate + L-aspartate = N-carbamoyl-L-aspartate + phosphate + H(+). The protein operates within pyrimidine metabolism; UMP biosynthesis via de novo pathway; (S)-dihydroorotate from bicarbonate: step 2/3. Its function is as follows. Catalyzes the condensation of carbamoyl phosphate and aspartate to form carbamoyl aspartate and inorganic phosphate, the committed step in the de novo pyrimidine nucleotide biosynthesis pathway. The chain is Aspartate carbamoyltransferase catalytic subunit from Rhizobium meliloti (strain 1021) (Ensifer meliloti).